Consider the following 277-residue polypeptide: Large ribosomal subunit protein uL2 (277 aa).

Residues 222–277 (GSVMNPNDHPHGGGEGKAPVGRKAPSTPWGKPALGLKTRNKKAKSDKLIVRRRNQK) are disordered.

This sequence belongs to the universal ribosomal protein uL2 family. Part of the 50S ribosomal subunit. Forms a bridge to the 30S subunit in the 70S ribosome.

In terms of biological role, one of the primary rRNA binding proteins. Required for association of the 30S and 50S subunits to form the 70S ribosome, for tRNA binding and peptide bond formation. It has been suggested to have peptidyltransferase activity; this is somewhat controversial. Makes several contacts with the 16S rRNA in the 70S ribosome. The chain is Large ribosomal subunit protein uL2 from Streptococcus agalactiae serotype Ia (strain ATCC 27591 / A909 / CDC SS700).